Reading from the N-terminus, the 63-residue chain is Arabinogalactan protein 22 (63 aa).

The signal sequence occupies residues Met1–Ser27. 4-hydroxyproline is present on residues Pro32, Pro34, and Pro36. O-linked (Ara...) hydroxyproline glycans are attached at residues Pro32, Pro34, and Pro36. Ser38 is lipidated: GPI-anchor amidated serine. Residues Asp39–His63 constitute a propeptide, removed in mature form.

It belongs to the AG-peptide AGP family. In terms of processing, contains 4-hydroxyproline; hydroxylated on Pro-32, Pro-34 and Pro-36. O-glycosylated on hydroxyprolines; noncontiguous hydroxylproline residues are glycosylated with arabinogalactan.

Its subcellular location is the cell membrane. Proteoglycan that seems to be implicated in diverse developmental roles such as differentiation, cell-cell recognition, embryogenesis and programmed cell death. In Arabidopsis thaliana (Mouse-ear cress), this protein is Arabinogalactan protein 22.